Consider the following 229-residue polypeptide: Ribosome maturation factor RimM (229 aa).

A disordered region spans residues 1–37; the sequence is MAGHDSGNAKRGRSPSFGVFVRKPVERTSAKGTSDGA. Residues 148–229 form the PRC barrel domain; the sequence is ADEFYWVDLI…RVVVDWEADY (82 aa).

Belongs to the RimM family. In terms of assembly, binds ribosomal protein uS19.

It localises to the cytoplasm. Functionally, an accessory protein needed during the final step in the assembly of 30S ribosomal subunit, possibly for assembly of the head region. Essential for efficient processing of 16S rRNA. May be needed both before and after RbfA during the maturation of 16S rRNA. It has affinity for free ribosomal 30S subunits but not for 70S ribosomes. This is Ribosome maturation factor RimM from Burkholderia pseudomallei (strain 668).